The sequence spans 132 residues: ATP synthase epsilon chain (132 aa).

Residues 88–102 are compositionally biased toward basic and acidic residues; it reads IDKERAEAARQRAQE. The segment at 88–112 is disordered; that stretch reads IDKERAEAARQRAQERLNSQSDDTD.

It belongs to the ATPase epsilon chain family. In terms of assembly, F-type ATPases have 2 components, CF(1) - the catalytic core - and CF(0) - the membrane proton channel. CF(1) has five subunits: alpha(3), beta(3), gamma(1), delta(1), epsilon(1). CF(0) has three main subunits: a, b and c. The F(1)F(0) complex interacts with SpoIIIJ and YqjG; YqgA is found in the same complex.

It localises to the cell membrane. In terms of biological role, produces ATP from ADP in the presence of a proton gradient across the membrane. This is ATP synthase epsilon chain (atpC) from Bacillus subtilis (strain 168).